Reading from the N-terminus, the 435-residue chain is Legumain (435 aa).

The first 17 residues, 1 to 17, serve as a signal peptide directing secretion; sequence MTWRVAVLLSLVLGAGA. Asn-93 is a glycosylation site (N-linked (GlcNAc...) asparagine). His-150 is an active-site residue. Asn-169 carries N-linked (GlcNAc...) asparagine glycosylation. Cys-191 acts as the Nucleophile in catalysis. 2 N-linked (GlcNAc...) asparagine glycosylation sites follow: Asn-265 and Asn-274. Positions 326–435 are excised as a propeptide; the sequence is DVKESQNLIG…AMDKVCLSHY (110 aa). Disulfide bonds link Cys-380–Cys-414 and Cys-392–Cys-431.

Belongs to the peptidase C13 family. Homodimer before autocatalytic removal of the propeptide. Monomer after autocatalytic processing. May interact with integrins. Glycosylated. In terms of processing, activated by autocatalytic processing at pH 4. As to expression, detected in kidney proximal tubules (at protein level). Ubiquitous. Particularly abundant in kidney and placenta.

Its subcellular location is the lysosome. It catalyses the reaction Hydrolysis of proteins and small molecule substrates at -Asn-|-Xaa- bonds.. With respect to regulation, inhibited by cystatin-C. Its function is as follows. Has a strict specificity for hydrolysis of asparaginyl bonds. Can also cleave aspartyl bonds slowly, especially under acidic conditions. Involved in the processing of proteins for MHC class II antigen presentation in the lysosomal/endosomal system. Also involved in MHC class I antigen presentation in cross-presenting dendritic cells by mediating cleavage and maturation of Perforin-2 (MPEG1), thereby promoting antigen translocation in the cytosol. Required for normal lysosomal protein degradation in renal proximal tubules. Required for normal degradation of internalized EGFR. Plays a role in the regulation of cell proliferation via its role in EGFR degradation. The protein is Legumain (Lgmn) of Mus musculus (Mouse).